Reading from the N-terminus, the 558-residue chain is Alkaline/neutral invertase CINV2 (558 aa).

Phosphoserine is present on residues S16, S19, and S50. Phosphothreonine is present on T79. A Phosphoserine modification is found at S555.

It belongs to the glycosyl hydrolase 100 family.

Its subcellular location is the cytoplasm. It localises to the cytosol. It catalyses the reaction Hydrolysis of terminal non-reducing beta-D-fructofuranoside residues in beta-D-fructofuranosides.. In terms of biological role, cytosolic invertase that may cleave sucrose into glucose and fructose, and that is involved in the regulation of root growth. May regulate sugar-mediated root development by controlling sucrose catabolism in root cells. This chain is Alkaline/neutral invertase CINV2, found in Arabidopsis thaliana (Mouse-ear cress).